Here is a 498-residue protein sequence, read N- to C-terminus: ADP,ATP carrier protein 1 (498 aa).

Over 1–33 the chain is Cytoplasmic; that stretch reads MSTTKSDNYISELRKVIWPIERYENKKFLPMAF. Residues 34–54 form a helical membrane-spanning segment; sequence MMFCILLNYSTLRSIKDGFVV. Cysteine 37 and cysteine 85 form a disulfide bridge. The Extracellular portion of the chain corresponds to 55–67; sequence TDIGAEAISFLKT. Residues 68-88 traverse the membrane as a helical segment; it reads YIVLPSAVIAMIVYVKLCDIL. Residues 89 to 92 are Cytoplasmic-facing; it reads KQEN. The helical transmembrane segment at 93–113 threads the bilayer; that stretch reads VFYVITSFFLAYFALFAFVLY. Residues 114–147 are Extracellular-facing; that stretch reads PNPDLVHPNPEAIESLSLAYPNFKWFIRIVGKWS. Residues 148-168 form a helical membrane-spanning segment; sequence FASFYTMAELWGTLMLSLLFW. At 169–184 the chain is on the cytoplasmic side; the sequence is QFANQITKTDEAKRFY. A helical transmembrane segment spans residues 185-205; it reads SMFGLLANLALPVTSLIIGYF. Topologically, residues 206-218 are extracellular; sequence LHEKTQIVAEHLK. Residues 219-239 form a helical membrane-spanning segment; it reads FTPLFVIMIISSLAVILTYRW. Residues 240–279 are Cytoplasmic-facing; the sequence is MNKNVLTDPKLYDPALVKGKKAKAKMSLIESFKMIFTSKY. Residues 280–300 traverse the membrane as a helical segment; sequence VGYIALLLIAYGISVNLVEGV. Over 301–320 the chain is Extracellular; sequence WKSKLKELHPTKEAYTMYMG. Residues 321–341 traverse the membrane as a helical segment; the sequence is QFQAYQGWVAIAFMIIGSNIL. Over 342–348 the chain is Cytoplasmic; sequence RKVSWLT. Residues 349–369 form a helical membrane-spanning segment; the sequence is AAMITPLMMLITGIAFFAFIF. Over 370–379 the chain is Extracellular; the sequence is FDSVIAMYLT. The chain crosses the membrane as a helical span at residues 380-400; it reads GILASGPLALAVMIGTIQNVL. Residues 401–438 are Cytoplasmic-facing; the sequence is SKGVKYSLFDATKNMAYIPLDKDLRVKGQAAVEVIGGR. Residue 436-442 coordinates ATP; it reads GGRFGKS. A helical membrane pass occupies residues 439–459; the sequence is FGKSGGAIIQSTFFIIFPALG. The Extracellular portion of the chain corresponds to 460–465; that stretch reads FVEATP. Residues 466-486 form a helical membrane-spanning segment; it reads YFASIFFVIVILWIYAVKGLN. The Cytoplasmic portion of the chain corresponds to 487–498; it reads KEYQVLVNNTEK.

Belongs to the ADP/ATP translocase tlc family.

It localises to the cell membrane. Its function is as follows. Provides the rickettsial cell with host ATP in exchange for rickettsial ADP. This is an obligate exchange system. This energy acquiring activity is an important component of rickettsial parasitism. The protein is ADP,ATP carrier protein 1 (tlcA) of Rickettsia bellii (strain RML369-C).